We begin with the raw amino-acid sequence, 299 residues long: Palmitoyltransferase ZDHHC3 (299 aa).

The Cytoplasmic segment spans residues 1–47 (MMLIPTHHFRDIERKPEYLQPEKCAPPPFPGPVGTMWFIRDGCGIAC). A Phosphotyrosine modification is found at Tyr18. A helical transmembrane segment spans residues 48 to 68 (AIVTWFLVLYAEFVVLFVMLI). Over 69–72 (PSRD) the chain is Lumenal. The chain crosses the membrane as a helical span at residues 73–93 (YAYSIINGIVFNLLAFLALAS). Topologically, residues 94–171 (HCRAMLTDPG…NCVGENNQKY (78 aa)) are cytoplasmic. Residues 128 to 254 (KCPKCCSIKP…DETGIEQLKK (127 aa)) enclose the DHHC domain. Cys146 carries S-palmitoyl cysteine lipidation. Residue Cys157 is the S-palmitoyl cysteine intermediate of the active site. Residues 172-192 (FVLFTMYIALISLHALIMVGF) traverse the membrane as a helical segment. Topologically, residues 193-214 (HFLHCFEEDWTKCSSFSPPTTV) are lumenal. Residues 215–235 (ILLILLCFEALLFLIFTSVMF) form a helical membrane-spanning segment. Residues 236–299 (GTQVHSICTD…GKADPYQYVV (64 aa)) are Cytoplasmic-facing.

It belongs to the DHHC palmitoyltransferase family. Monomer. Homooligomers. The monomeric form has a higher catalytic activity. Forms heterooligomers with ZDHHC7. Interacts with TNFRSF10A. Phosphorylation by FGFR1 and SRC probably regulates the palmitoyltransferase activity. In terms of processing, autopalmitoylated.

It localises to the golgi apparatus membrane. It catalyses the reaction L-cysteinyl-[protein] + hexadecanoyl-CoA = S-hexadecanoyl-L-cysteinyl-[protein] + CoA. The enzyme catalyses L-cysteinyl-[protein] + tetradecanoyl-CoA = S-tetradecanoyl-L-cysteinyl-[protein] + CoA. The catalysed reaction is L-cysteinyl-[protein] + octadecanoyl-CoA = S-octadecanoyl-L-cysteinyl-[protein] + CoA. In terms of biological role, golgi-localized palmitoyltransferase that catalyzes the addition of palmitate onto various protein substrates. Has no stringent fatty acid selectivity and in addition to palmitate can also transfer onto target proteins myristate from tetradecanoyl-CoA and stearate from octadecanoyl-CoA. Plays an important role in G protein-coupled receptor signaling pathways involving GNAQ and potentially other heterotrimeric G proteins by regulating their dynamic association with the plasma membrane. Palmitoylates ITGA6 and ITGB4, thereby regulating the alpha-6/beta-4 integrin localization, expression and function in cell adhesion to laminin. Plays a role in the TRAIL-activated apoptotic signaling pathway most probably through the palmitoylation and localization to the plasma membrane of TNFRSF10A. In the brain, by palmitoylating the gamma subunit GABRG2 of GABA(A) receptors and regulating their postsynaptic accumulation, plays a role in synaptic GABAergic inhibitory function and GABAergic innervation. Palmitoylates the neuronal protein GAP43 which is also involved in the formation of GABAergic synapses. Palmitoylates NCDN thereby regulating its association with endosome membranes. Probably palmitoylates PRCD and is involved in its proper localization within the photoreceptor. Could mediate the palmitoylation of NCAM1 and regulate neurite outgrowth. Could palmitoylate DNAJC5 and regulate its localization to Golgi membranes. Also constitutively palmitoylates DLG4. May also palmitoylate SNAP25. Could palmitoylate the glutamate receptors GRIA1 and GRIA2 but this has not been confirmed in vivo. Could also palmitoylate the D(2) dopamine receptor DRD2. May also palmitoylate LAMTOR1, promoting its localization to lysosomal membranes. Palmitoylates the Toll-like receptor 9/TLR9 in the Golgi and thereby regulates TLR9 trafficking to endosomes. May palmitoylate CALHM1 and CALHM3 subunits of gustatory voltage-gated ion channels and modulate channel gating and kinetics. The chain is Palmitoyltransferase ZDHHC3 from Rattus norvegicus (Rat).